We begin with the raw amino-acid sequence, 153 residues long: Histone H2B.8 (153 aa).

2 stretches are compositionally biased toward basic and acidic residues: residues 1–28 (MAPK…EKAP) and 36–53 (EKRL…EGKK). The disordered stretch occupies residues 1–61 (MAPKAEKKPA…KKAGRKKAKK (61 aa)). Lys-7 and Lys-37 each carry N6-acetyllysine. Lys-149 participates in a covalent cross-link: Glycyl lysine isopeptide (Lys-Gly) (interchain with G-Cter in ubiquitin).

This sequence belongs to the histone H2B family. As to quaternary structure, the nucleosome is a histone octamer containing two molecules each of H2A, H2B, H3 and H4 assembled in one H3-H4 heterotetramer and two H2A-H2B heterodimers. The octamer wraps approximately 147 bp of DNA. Post-translationally, can be acetylated to form H2BK6ac and H2BK33ac. Monoubiquitinated by BRE1 to form H2BK143ub1 and deubiquitinated by UBP26. Required for heterochromatic histone H3 di- and trimethylation at H3K4me. May give a specific tag for epigenetic transcriptional activation.

The protein localises to the nucleus. The protein resides in the chromosome. Its function is as follows. Core component of nucleosome. Nucleosomes wrap and compact DNA into chromatin, limiting DNA accessibility to the cellular machineries which require DNA as a template. Histones thereby play a central role in transcription regulation, DNA repair, DNA replication and chromosomal stability. DNA accessibility is regulated via a complex set of post-translational modifications of histones, also called histone code, and nucleosome remodeling. This Oryza sativa subsp. indica (Rice) protein is Histone H2B.8 (H2B.8).